The chain runs to 888 residues: Interference hedgehog (888 aa).

Positions 1-24 (MSLTRFSLCLLLTLLLAAIPVYLA) are cleaved as a signal peptide. Topologically, residues 25-688 (SPDPGVRILR…SHNETFNLNP (664 aa)) are extracellular. 4 consecutive Ig-like C2-type domains span residues 28-123 (PGVR…ARLE), 134-215 (EGFK…VRLA), 234-321 (PHLL…SIQL), and 327-414 (PRIV…LQVN). 3 disulfides stabilise this stretch: C51–C106, C155–C203, and C257–C305. N-linked (GlcNAc...) asparagine glycans are attached at residues N80, N185, N192, N281, N336, N365, N369, and N455. C348 and C396 are joined by a disulfide. Fibronectin type-III domains lie at 450-557 (PPSA…LQRG) and 565-660 (VPSL…TQRP). R486 and K493 together coordinate heparin. N516 is a glycosylation site (N-linked (GlcNAc...) asparagine). Residue R531 participates in heparin binding. An N-linked (GlcNAc...) asparagine glycan is attached at N547. The segment covering 655 to 667 (GRTQRPRVSTTTE) has biased composition (polar residues). Residues 655–679 (GRTQRPRVSTTTEPAVHAMDTTTPS) form a disordered region. Residue N681 is glycosylated (N-linked (GlcNAc...) asparagine). A helical membrane pass occupies residues 689–709 (LLTGTIGGGALLVLLVVSACL). Residues 710–888 (CLCRRRSSRG…SSGSLNSVGV (179 aa)) are Cytoplasmic-facing. Disordered stretches follow at residues 759-789 (AQQQ…DMSY), 812-864 (SSSL…PGRV), and 869-888 (ARLS…SVGV). Low complexity predominate over residues 760–775 (QQQQQQQQQQQQQQQQ). Residues 843–859 (QPTDGSTADSPRLQASN) are compositionally biased toward polar residues. Low complexity predominate over residues 872–888 (SSRSENLSSGSLNSVGV).

It belongs to the immunoglobulin superfamily. IHOG family. Homodimer. Heterotetramer; 2 iHog chains bind 2 hh chains when facilitated by heparin, heparin is required to promote high-affinity interactions between hh and iHog.

Its subcellular location is the membrane. In terms of biological role, mediates response to the active Hedgehog (Hh) protein signal in embryos, functioning upstream or at the level of patched (ptc). This Drosophila grimshawi (Hawaiian fruit fly) protein is Interference hedgehog.